Here is a 304-residue protein sequence, read N- to C-terminus: MIVRPQQHWIRLIFVWHGSVLSKIFSRLLLNFLLSIAVIIMLPWYTMLGIKFTLAPFSILGVAIAIFLGFRNNACYARYVEARHLWGQLMIASRSILREVKTTLPDERGIEDFVRLQIAFAHCLRMTLRRQPQTQVLGNYLDQEALQKVVASHSPANRILLLMGEWLAIRRRSGKLSDILFHSLNNRLNDMSSVLAGCERIANTPVPFAYTLILHRTVYLFCIMLPFALVVDLHYMTPFISVLISYTFIALDALAEELEDPFGTENNDLPLDAICNAIEIDLLQMNDERDIPAKRIPDKRYQLT.

The next 4 helical transmembrane spans lie at 28–48, 50–70, 209–229, and 235–255; these read LLLN…YTML, IKFT…FLGF, AYTL…PFAL, and YMTP…DALA.

It belongs to the anion channel-forming bestrophin (TC 1.A.46) family.

It is found in the cell membrane. The sequence is that of Voltage-dependent anion channel-forming protein YneE (yneE) from Salmonella typhi.